The sequence spans 84 residues: Small ribosomal subunit protein uS17 (84 aa).

This sequence belongs to the universal ribosomal protein uS17 family. As to quaternary structure, part of the 30S ribosomal subunit.

One of the primary rRNA binding proteins, it binds specifically to the 5'-end of 16S ribosomal RNA. This Enterobacter sp. (strain 638) protein is Small ribosomal subunit protein uS17.